The following is a 349-amino-acid chain: MTKQDLMDIIVKVAPGSPLREGVDYILDAGIGALIIIGYDDEVEKVRDGGFLIDCDYTPERIFELSKMDGAIILNDDCSKILYANVHVQPDNSYSTTESGTRHRTAERAAKHLKREVVAISERKKNVTLYKGNLKYRLKNFDELNIEVGQVLKTLESYRHVLNRSLDSLTILELDDLVTVLDVANTLQRFEMVRRISEEITRYLLELGSRGRLVNMQVSELIWDLDEEEESFLKDYIDDETDTDSVRRYLHSLSDSELLEVENVVVALGYSKSSSVFDNKIAAKGYRVLEKISKLTKKDVEKIVNTYKDISEIQEVTDEDFSAIKISKFKIKALRAGINRLKFTIEMQR.

A DAC domain is found at 3–143 (KQDLMDIIVK…LKYRLKNFDE (141 aa)). ATP-binding positions include G70, V88, and 101–105 (TRHRT).

The protein belongs to the DisA family. As to quaternary structure, homooctamer. The cofactor is Mg(2+).

The enzyme catalyses 2 ATP = 3',3'-c-di-AMP + 2 diphosphate. Functionally, participates in a DNA-damage check-point. DisA forms globular foci that rapidly scan along the chromosomes searching for lesions. Its function is as follows. Also has diadenylate cyclase activity, catalyzing the condensation of 2 ATP molecules into cyclic di-AMP (c-di-AMP). c-di-AMP likely acts as a signaling molecule that may couple DNA integrity with a cellular process. This is DNA integrity scanning protein DisA from Fusobacterium nucleatum subsp. nucleatum (strain ATCC 25586 / DSM 15643 / BCRC 10681 / CIP 101130 / JCM 8532 / KCTC 2640 / LMG 13131 / VPI 4355).